The primary structure comprises 308 residues: Ribosomal RNA small subunit methyltransferase H (308 aa).

Residues 36-38, aspartate 55, phenylalanine 86, aspartate 103, and glutamine 110 each bind S-adenosyl-L-methionine; that span reads GGH.

This sequence belongs to the methyltransferase superfamily. RsmH family.

It localises to the cytoplasm. The enzyme catalyses cytidine(1402) in 16S rRNA + S-adenosyl-L-methionine = N(4)-methylcytidine(1402) in 16S rRNA + S-adenosyl-L-homocysteine + H(+). Functionally, specifically methylates the N4 position of cytidine in position 1402 (C1402) of 16S rRNA. The protein is Ribosomal RNA small subunit methyltransferase H of Helicobacter pylori (strain Shi470).